The sequence spans 484 residues: Tubulin-like protein TubZ (484 aa).

GTP is bound at residue 32 to 33; that stretch reads QK. A Mg(2+)-binding site is contributed by D64. GTP-binding positions include 140 to 142, N213, K237, and N241; that span reads GVG. The tract at residues 408–484 is required to bind TubR-DNA complex; sequence RKQDEEKVDI…LKTSNPFKKR (77 aa). Residues 428 to 484 are disordered; sequence TFNPYNKNQGFGGASRFSGGKNSAFKRQTSEATSTQNQQEEENIISTLKTSNPFKKR. The span at 452–484 shows a compositional bias: polar residues; it reads FKRQTSEATSTQNQQEEENIISTLKTSNPFKKR.

The protein belongs to the FtsZ family. TubZ subfamily. As to quaternary structure, forms filaments; a 2-stranded filament forms with the non-hydrolyzable GTP-gamma-S which is probably a precursor to the 4-stranded filament that forms in the presence of GTP. The 4-stranded form binds GDP. In vivo polymerizes to form dynamic filaments that often extend from one cell pole to the other, moving in a unidirectional manner. Filaments polymerize at the plus end and depolymerize at the minus end, a process called treadmilling. Polymerization only occurs above a critical concentration, it does not require upstream tubR. The tubC DNA-TubR complex binds to TubZ. Requires Mg(2+) as cofactor.

Its subcellular location is the cytoplasm. It catalyses the reaction GTP + H2O = GDP + phosphate + H(+). With respect to regulation, GTPase is inhibited by GTP-gamma-S, which also stabilizes filaments. In terms of biological role, a tubulin-like, filament forming GTPase; the motor component of the type III plasmid partition system which ensures correct segregation of the pBtoxis plasmid. Filaments may seed from the centromere-like site (tubC) when bound by DNA-binding protein TubR; the tubC-TubR complex stabilizes the TubZ filament. Filaments grow at the plus end and depolymerize at the minus end, a process called treadmilling. TubR-tubC complexes track the depolymerizing minus end of the filament, probably pulling plasmid within the cell. Required for pBtoxis plasmid replication/partition. Binds the TubR-tubC complex; GTP is not required for binding to TubR-tubC. TubZ alone does not bind DNA. Has a high GTPase activity in the presence of Mg(2+); in the presence of GTP assembles into dynamic filaments which upon polymerization bind almost exclusively GDP. Filament formation is cooperative, requiring a critical concentration. Formation occurs very quickly and is followed by disassembly as GTP is consumed. The protein is Tubulin-like protein TubZ of Bacillus thuringiensis subsp. israelensis.